The primary structure comprises 264 residues: uncharacterized protein (264 aa).

This is an uncharacterized protein from Bacillus subtilis (strain 168).